The chain runs to 118 residues: Large ribosomal subunit protein bL12 (118 aa).

Methionine 1 carries the N-acetylmethionine; in form MA2 modification.

It belongs to the bacterial ribosomal protein bL12 family. Homodimer. Part of the ribosomal stalk of the 50S ribosomal subunit. Forms a multimeric L10(L12)X complex, where L10 forms an elongated spine to which 2 to 4 L12 dimers bind in a sequential fashion. Binds GTP-bound translation factors. Post-translationally, acetylation of Met-1 converts MA1 to MA2.

Functionally, forms part of the ribosomal stalk which helps the ribosome interact with GTP-bound translation factors. Is thus essential for accurate translation. This is Large ribosomal subunit protein bL12 from Micrococcus luteus (Micrococcus lysodeikticus).